A 526-amino-acid chain; its full sequence is Peptide chain release factor 3 (526 aa).

The tr-type G domain occupies 9–277 (DKRRTFAIIS…GIVEWAPKPL (269 aa)). GTP is bound by residues 18 to 25 (SHPDAGKT), 86 to 90 (DTPGH), and 140 to 143 (NKLD).

This sequence belongs to the TRAFAC class translation factor GTPase superfamily. Classic translation factor GTPase family. PrfC subfamily.

It localises to the cytoplasm. In terms of biological role, increases the formation of ribosomal termination complexes and stimulates activities of RF-1 and RF-2. It binds guanine nucleotides and has strong preference for UGA stop codons. It may interact directly with the ribosome. The stimulation of RF-1 and RF-2 is significantly reduced by GTP and GDP, but not by GMP. This Shewanella sp. (strain ANA-3) protein is Peptide chain release factor 3.